A 421-amino-acid chain; its full sequence is UDP-N-acetylglucosamine 1-carboxyvinyltransferase (421 aa).

Residue 22-23 (KN) participates in phosphoenolpyruvate binding. Residue Arg93 coordinates UDP-N-acetyl-alpha-D-glucosamine. The active-site Proton donor is the Cys117. A 2-(S-cysteinyl)pyruvic acid O-phosphothioketal modification is found at Cys117. UDP-N-acetyl-alpha-D-glucosamine contacts are provided by residues 122 to 126 (RPVDL), Asp308, and Val330.

This sequence belongs to the EPSP synthase family. MurA subfamily.

It is found in the cytoplasm. The enzyme catalyses phosphoenolpyruvate + UDP-N-acetyl-alpha-D-glucosamine = UDP-N-acetyl-3-O-(1-carboxyvinyl)-alpha-D-glucosamine + phosphate. Its pathway is cell wall biogenesis; peptidoglycan biosynthesis. In terms of biological role, cell wall formation. Adds enolpyruvyl to UDP-N-acetylglucosamine. The sequence is that of UDP-N-acetylglucosamine 1-carboxyvinyltransferase from Azotobacter vinelandii (strain DJ / ATCC BAA-1303).